Here is a 248-residue protein sequence, read N- to C-terminus: Ras-related protein Rab-28 (248 aa).

The interval 1–30 (MTTMGEDEAPALPKKSPLPEKIDEADVDDD) is disordered. GTP is bound at residue 42 to 50 (GDGASGKTS). An Effector region motif is present at residues 64–72 (YHQTLGLDF). GTP is bound by residues 91 to 95 (DIGGQ), 152 to 155 (NKTD), and 182 to 184 (SAK). Positions 227–248 (QSDASYARRSDQSRSTSVCSIT) are disordered. A compositionally biased stretch (polar residues) spans 239–248 (SRSTSVCSIT).

It belongs to the small GTPase superfamily. Rab family. In terms of tissue distribution, expressed in amphid and phasmid ciliated sensory neurons.

The protein resides in the cell projection. Its subcellular location is the cilium membrane. The protein localises to the perikaryon. It is found in the cytoplasm. It localises to the cytoskeleton. The protein resides in the cilium axoneme. In terms of biological role, GTPase. Intraflagellar transport (IFT) cargo that undergoes bidirectional IFT along the ciliary axoneme when in active GTP-bound state in amphid and phasmid ciliated sensory neurons. Targeting and function as IFT cargo may depend on the BBSome, an IFT cargo adapter. Does not undergo IFT when in inactive GDP-bound state. May in turn play a role in cilium structure and/or function in ciliated sensory neurons. The protein is Ras-related protein Rab-28 of Caenorhabditis elegans.